The following is a 493-amino-acid chain: GTPase Der (493 aa).

EngA-type G domains follow at residues 3 to 166 (PVVA…SGKG) and 207 to 380 (LKLA…DCAT). GTP contacts are provided by residues 9–16 (GRPNVGKS), 56–60 (DTGGI), 118–121 (NKTD), 213–220 (GKPNVGKS), 260–264 (DTAGV), and 325–328 (NKWD). One can recognise a KH-like domain in the interval 381 to 465 (RRVNTSLLTR…PIRIQFKEGA (85 aa)).

The protein belongs to the TRAFAC class TrmE-Era-EngA-EngB-Septin-like GTPase superfamily. EngA (Der) GTPase family. Associates with the 50S ribosomal subunit.

Functionally, GTPase that plays an essential role in the late steps of ribosome biogenesis. This Photorhabdus laumondii subsp. laumondii (strain DSM 15139 / CIP 105565 / TT01) (Photorhabdus luminescens subsp. laumondii) protein is GTPase Der.